The chain runs to 416 residues: Putative competence-damage inducible protein (416 aa).

This sequence belongs to the CinA family.

The chain is Putative competence-damage inducible protein from Bacillus subtilis (strain 168).